Here is a 775-residue protein sequence, read N- to C-terminus: 5-methyltetrahydropteroyltriglutamate--homocysteine methyltransferase (775 aa).

Residues 16 to 19 (REMK) and lysine 115 each bind 5-methyltetrahydropteroyltri-L-glutamate. Residues 435 to 437 (IGS) and glutamate 488 contribute to the L-homocysteine site. Residues 435 to 437 (IGS) and glutamate 488 contribute to the L-methionine site. 5-methyltetrahydropteroyltri-L-glutamate-binding positions include 519–520 (RC) and tryptophan 565. Residue aspartate 603 participates in L-homocysteine binding. L-methionine is bound at residue aspartate 603. Residue glutamate 609 participates in 5-methyltetrahydropteroyltri-L-glutamate binding. Zn(2+) contacts are provided by histidine 645, cysteine 647, and glutamate 669. Histidine 698 functions as the Proton donor in the catalytic mechanism. Cysteine 730 provides a ligand contact to Zn(2+).

It belongs to the vitamin-B12 independent methionine synthase family. Requires Zn(2+) as cofactor.

It catalyses the reaction 5-methyltetrahydropteroyltri-L-glutamate + L-homocysteine = tetrahydropteroyltri-L-glutamate + L-methionine. The protein operates within amino-acid biosynthesis; L-methionine biosynthesis via de novo pathway; L-methionine from L-homocysteine (MetE route): step 1/1. In terms of biological role, catalyzes the transfer of a methyl group from 5-methyltetrahydrofolate to homocysteine resulting in methionine formation. This is 5-methyltetrahydropteroyltriglutamate--homocysteine methyltransferase from Coxiella burnetii (strain Dugway 5J108-111).